The chain runs to 173 residues: MEEPQRARSHTVTTTASSFAENFSTSSSSFAYDREFLRTLPGFLIVAEIVLGLLVWTLIAGTEYFRVPAFGWVMFVAVFYWVLTVFFLIIYITMTYTRIPQVPWTTVGLCFNGSAFVLYLSAAVVDASSVSPERDSHNFNSWAASSFFAFLVTICYAGNTYFSFIAWRSRTIQ.

In terms of domain architecture, MARVEL spans 36 to 168 (FLRTLPGFLI…NTYFSFIAWR (133 aa)). 4 helical membrane-spanning segments follow: residues 40–60 (LPGF…TLIA), 70–90 (FGWV…FLII), 105–125 (TTVG…AAVV), and 147–167 (FFAF…FIAW).

The protein belongs to the chemokine-like factor family. As to expression, highly expressed in liver and pancreas.

It is found in the membrane. It localises to the cytoplasm. The protein resides in the nucleus. The polypeptide is CKLF-like MARVEL transmembrane domain-containing protein 8 (CMTM8) (Homo sapiens (Human)).